The primary structure comprises 132 residues: uncharacterized protein (132 aa).

The 69-residue stretch at 1-69 (MNIGEAAKKS…LDEVGKLLTL (69 aa)) folds into the HTH merR-type domain. The H-T-H motif DNA-binding region spans 4-23 (GEAAKKSGLTPKMIRYYESI).

It is found in the cytoplasm. This is an uncharacterized protein from Pseudomonas aeruginosa (strain ATCC 15692 / DSM 22644 / CIP 104116 / JCM 14847 / LMG 12228 / 1C / PRS 101 / PAO1).